Consider the following 79-residue polypeptide: uncharacterized protein (79 aa).

This is an uncharacterized protein from Dryophytes versicolor (chameleon treefrog).